Consider the following 546-residue polypeptide: Calcitonin receptor-like protein 1 (546 aa).

Over 1–171 the chain is Cytoplasmic; it reads MADATSPFNV…EVARNARKLE (171 aa). A helical membrane pass occupies residues 172 to 192; it reads FVGLGLSLVSLILAISIFSYF. Residues 193–205 are Extracellular-facing; that stretch reads RRLRVFRNLLHLH. The helical transmembrane segment at 206-226 threads the bilayer; the sequence is LMIAMLMVVILRLVLYIDLIF. Over 227-251 the chain is Cytoplasmic; it reads TGENGPHTNSAEGKTINTMPIVCEG. The helical transmembrane segment at 252–272 threads the bilayer; the sequence is MFFFLEYFKTVTFCWMFLEGI. Over 273–292 the chain is Extracellular; the sequence is YLNNQIVFGFFNSEPKLLPY. The helical transmembrane segment at 293–313 threads the bilayer; the sequence is FIAGYGIPLVHTMLWLLVVLI. Topologically, residues 314 to 333 are cytoplasmic; sequence KKDFKVERCLGSYYLEPEFW. The helical transmembrane segment at 334 to 354 threads the bilayer; the sequence is ILDGPRMAELVINLFFICNVI. Residues 355-377 are Extracellular-facing; it reads RVLYSKVRESNNTSEAGLKKSVK. N-linked (GlcNAc...) asparagine glycosylation is found at Asn-365 and Asn-366. A helical transmembrane segment spans residues 378-398; sequence AAMMLLPLLGVPNIMQTIPFA. Residues 399–403 lie on the Cytoplasmic side of the membrane; that stretch reads PTRDN. A helical membrane pass occupies residues 404–424; the sequence is IMVFAVWTYTASFTYMYQGLM. Residues 425–546 are Extracellular-facing; the sequence is VASIYCFTNK…EGSNRSTKSP (122 aa). 2 N-linked (GlcNAc...) asparagine glycosylation sites follow: Asn-472 and Asn-476. The disordered stretch occupies residues 472 to 546; it reads NGTANASAPQ…EGSNRSTKSP (75 aa). Residues 473–485 show a composition bias toward polar residues; it reads GTANASAPQTNNA. The segment covering 500–520 has biased composition (basic and acidic residues); sequence KGSDDSTTKLMKDAVMEEEKN. Residue Asn-540 is glycosylated (N-linked (GlcNAc...) asparagine).

This sequence belongs to the G-protein coupled receptor 2 family. As to expression, expression was observed in the mechanosensory neuron pairs PLM, ALM, FLP, OLQD, and OLQV, the chemosensory neurons PHA, PHB, RMEV, the ring motor neurons RMED, and the pharyngeal interneuron pair I1. Expression in sensory neurons PHA, PQR and URY are responsible for mate searching behavior. Expressed in AIY, RIM, RIA, and other neurons.

The protein resides in the cell membrane. Functionally, G-protein coupled receptor for PDF neuropeptides. Plays a role in responses to environmental signals, including chemicals and touch, and in modulating locomotory behaviors. Capable of transducing signals via an adenylate cyclase acy-1 cAMP-dependent pathway. Required to regulate the sex-specific expression of TGFbeta-like daf-7 in the ASJ chemosensory neurons, perhaps acting via acy-1. Involved in modulating mate searching behavior independent of nutritional status. In the presence of food, plays a role in initiating and extending exploratory roaming behavior, perhaps acting in AIY, RIM, RIA, and other neurons, in opposition to 5-hydroxytryptamine (serotonin) signaling. Involved in mediating arousal from the sleep-like state called lethargus, which occurs during molting between larval and adult stages, in part by regulating touch sensitivity. May play a role in circadian rhythms of locomotor activity. G-protein coupled receptor which is activated by neuropeptides PDF-1 and PDF-2. Probably acts through the G-alpha(s) type of G proteins to elevate cAMP levels. Its function is as follows. G-protein coupled receptor which is activated by neuropeptides PDF-1 and PDF-2; however, activation is lower compared to isoforms a and b. Probably inhibits cAMP levels through the G-alpha(i/o) type of G proteins. The protein is Calcitonin receptor-like protein 1 (pdfr-1) of Caenorhabditis elegans.